A 314-amino-acid chain; its full sequence is Probable dimethyladenosine transferase (314 aa).

Residues His36, Leu38, Gly63, Glu84, Asp112, and Asn127 each coordinate S-adenosyl-L-methionine.

It belongs to the class I-like SAM-binding methyltransferase superfamily. rRNA adenine N(6)-methyltransferase family. Part of the small subunit (SSU) processome, composed of more than 70 proteins and the RNA chaperone small nucleolar RNA (snoRNA) U3.

The protein resides in the nucleus. Its subcellular location is the nucleoplasm. It localises to the nucleolus. It carries out the reaction adenosine(1779)/adenosine(1780) in 18S rRNA + 4 S-adenosyl-L-methionine = N(6)-dimethyladenosine(1779)/N(6)-dimethyladenosine(1780) in 18S rRNA + 4 S-adenosyl-L-homocysteine + 4 H(+). Its function is as follows. Specifically dimethylates two adjacent adenosines in the loop of a conserved hairpin near the 3'-end of 18S rRNA in the 40S particle. Involved in the pre-rRNA processing steps leading to small-subunit rRNA production independently of its RNA-modifying catalytic activity. Part of the small subunit (SSU) processome, first precursor of the small eukaryotic ribosomal subunit. During the assembly of the SSU processome in the nucleolus, many ribosome biogenesis factors, an RNA chaperone and ribosomal proteins associate with the nascent pre-rRNA and work in concert to generate RNA folding, modifications, rearrangements and cleavage as well as targeted degradation of pre-ribosomal RNA by the RNA exosome. In Dictyostelium discoideum (Social amoeba), this protein is Probable dimethyladenosine transferase (dimt1).